Consider the following 316-residue polypeptide: Acetyl-coenzyme A carboxylase carboxyl transferase subunit alpha (316 aa).

The region spanning 40 to 290 is the CoA carboxyltransferase C-terminal domain; that stretch reads KARKELQRIY…RERFAHHLQE (251 aa).

This sequence belongs to the AccA family. As to quaternary structure, acetyl-CoA carboxylase is a heterohexamer composed of biotin carboxyl carrier protein (AccB), biotin carboxylase (AccC) and two subunits each of ACCase subunit alpha (AccA) and ACCase subunit beta (AccD).

It localises to the cytoplasm. The catalysed reaction is N(6)-carboxybiotinyl-L-lysyl-[protein] + acetyl-CoA = N(6)-biotinyl-L-lysyl-[protein] + malonyl-CoA. Its pathway is lipid metabolism; malonyl-CoA biosynthesis; malonyl-CoA from acetyl-CoA: step 1/1. Functionally, component of the acetyl coenzyme A carboxylase (ACC) complex. First, biotin carboxylase catalyzes the carboxylation of biotin on its carrier protein (BCCP) and then the CO(2) group is transferred by the carboxyltransferase to acetyl-CoA to form malonyl-CoA. This Acidithiobacillus ferrooxidans (strain ATCC 23270 / DSM 14882 / CIP 104768 / NCIMB 8455) (Ferrobacillus ferrooxidans (strain ATCC 23270)) protein is Acetyl-coenzyme A carboxylase carboxyl transferase subunit alpha.